A 207-amino-acid chain; its full sequence is High frequency lysogenization protein HflD homolog (207 aa).

This sequence belongs to the HflD family.

It localises to the cytoplasm. Its subcellular location is the cell inner membrane. The sequence is that of High frequency lysogenization protein HflD homolog from Teredinibacter turnerae (strain ATCC 39867 / T7901).